Reading from the N-terminus, the 381-residue chain is Chymosin (381 aa).

Residues 1–16 (MRCLVVLLAVFALSQG) form the signal peptide. Positions 17 to 58 (AEITRIPLYKGKPLRKALKERGLLEDFLQKQQYGVSSEYSGF) are cleaved as a propeptide — activation peptide. A Peptidase A1 domain is found at 74 to 378 (YFGKIYLGTP…DRANNLVGLA (305 aa)). Residue Asp92 is part of the active site. Cystine bridges form between Cys105/Cys110 and Cys265/Cys269. The active site involves Asp274. Cys308 and Cys341 are joined by a disulfide.

It belongs to the peptidase A1 family. As to quaternary structure, monomer.

It catalyses the reaction Broad specificity similar to that of pepsin A. Clots milk by cleavage of a single 104-Ser-Phe-|-Met-Ala-107 bond in kappa-chain of casein.. In terms of biological role, chymosin is synthesized in the mucosa of the stomach. The enzyme hydrolyzes casein to paracasein. The sequence is that of Chymosin (CYM) from Ovis aries (Sheep).